A 98-amino-acid polypeptide reads, in one-letter code: Gas vesicle protein J2 (98 aa).

The disordered stretch occupies residues 75–98 (AGVDADDSKSVLERPDPPTTEGSE). Residues 80–90 (DDSKSVLERPD) show a composition bias toward basic and acidic residues.

The protein belongs to the gas vesicle GvpA family. As to quaternary structure, gvpF to GvpM interact with each other in vitro, and may form multi-subunit complex(es). Interacts with GvpA.

The protein localises to the gas vesicle. Functionally, a minor component of the gas vesicle. Proteins GvpF to GvpM might be involved in nucleating gas vesicle formation. Gas vesicles are hollow, gas filled proteinaceous nanostructures found in several microbial planktonic microorganisms. They allow positioning of halobacteria at the optimal depth for growth in the poorly aerated, shallow brine pools of their habitat. Its function is as follows. Expression of 2 c-vac DNA fragments containing 2 divergently transcribed regions (gvpE-gvpF-gvpG-gvpH-gvpI-gvpJ-gvpK-gvpL-gvpM and gvpA-gvpC-gvpN-gvpO) allows H.volcanii to produce gas vesicles. The chain is Gas vesicle protein J2 from Halobacterium salinarum (strain ATCC 700922 / JCM 11081 / NRC-1) (Halobacterium halobium).